Consider the following 418-residue polypeptide: Serine hydroxymethyltransferase (418 aa).

(6S)-5,6,7,8-tetrahydrofolate-binding positions include L118 and 122–124 (GHL). K227 is subject to N6-(pyridoxal phosphate)lysine. E242 lines the (6S)-5,6,7,8-tetrahydrofolate pocket.

This sequence belongs to the SHMT family. As to quaternary structure, homodimer. Pyridoxal 5'-phosphate is required as a cofactor.

It is found in the cytoplasm. The catalysed reaction is (6R)-5,10-methylene-5,6,7,8-tetrahydrofolate + glycine + H2O = (6S)-5,6,7,8-tetrahydrofolate + L-serine. It functions in the pathway one-carbon metabolism; tetrahydrofolate interconversion. Its pathway is amino-acid biosynthesis; glycine biosynthesis; glycine from L-serine: step 1/1. Catalyzes the reversible interconversion of serine and glycine with tetrahydrofolate (THF) serving as the one-carbon carrier. This reaction serves as the major source of one-carbon groups required for the biosynthesis of purines, thymidylate, methionine, and other important biomolecules. Also exhibits THF-independent aldolase activity toward beta-hydroxyamino acids, producing glycine and aldehydes, via a retro-aldol mechanism. The polypeptide is Serine hydroxymethyltransferase (Chloroflexus aggregans (strain MD-66 / DSM 9485)).